A 238-amino-acid chain; its full sequence is ATP synthase subunit O, mitochondrial (238 aa).

The N-terminal 36 residues, 1–36 (MANRFRSGISFFKTIAVTDSVSSVRSKSLFPALRTY), are a transit peptide targeting the mitochondrion. At threonine 90 the chain carries Phosphothreonine.

The protein belongs to the ATPase delta chain family. In terms of assembly, F-type ATPases have 2 components, CF(1) - the catalytic core - and CF(0) - the membrane proton channel. CF(1) has five subunits: alpha(3), beta(3), gamma(1), delta(1), epsilon(1). CF(0) has three main subunits: a, b and c.

It localises to the mitochondrion. The protein localises to the mitochondrion inner membrane. Functionally, mitochondrial membrane ATP synthase (F(1)F(0) ATP synthase or Complex V) produces ATP from ADP in the presence of a proton gradient across the membrane which is generated by electron transport complexes of the respiratory chain. F-type ATPases consist of two structural domains, F(1) - containing the extramembraneous catalytic core and F(0) - containing the membrane proton channel, linked together by a central stalk and a peripheral stalk. During catalysis, ATP synthesis in the catalytic domain of F(1) is coupled via a rotary mechanism of the central stalk subunits to proton translocation. Part of the complex F(0) domain and the peripheric stalk, which acts as a stator to hold the catalytic alpha(3)beta(3) subcomplex and subunit a/ATP6 static relative to the rotary elements. The sequence is that of ATP synthase subunit O, mitochondrial from Arabidopsis thaliana (Mouse-ear cress).